The sequence spans 195 residues: Molybdopterin synthase catalytic subunit (195 aa).

Residues 1–37 form a disordered region; the sequence is MSARPEPQPGSERNATEPLPSHLDPTTYPRTLTTTHG. The segment covering 25–37 has biased composition (low complexity); that stretch reads PTTYPRTLTTTHG. Substrate-binding positions include 141–142, K157, and 164–166; these read HR and KRE.

The protein belongs to the MoaE family. MOCS2B subfamily. As to quaternary structure, heterotetramer; composed of 2 small (MOCS2A) and 2 large (MOCS2B) subunits.

Its subcellular location is the cytoplasm. The enzyme catalyses 2 [molybdopterin-synthase sulfur-carrier protein]-C-terminal-Gly-aminoethanethioate + cyclic pyranopterin phosphate + H2O = molybdopterin + 2 [molybdopterin-synthase sulfur-carrier protein]-C-terminal Gly-Gly + 2 H(+). Its pathway is cofactor biosynthesis; molybdopterin biosynthesis. Its function is as follows. Catalytic subunit of the molybdopterin synthase complex, a complex that catalyzes the conversion of precursor Z into molybdopterin. Acts by mediating the incorporation of 2 sulfur atoms from thiocarboxylated MOCS2A into precursor Z to generate a dithiolene group. This chain is Molybdopterin synthase catalytic subunit, found in Emericella nidulans (strain FGSC A4 / ATCC 38163 / CBS 112.46 / NRRL 194 / M139) (Aspergillus nidulans).